Consider the following 159-residue polypeptide: ATP synthase subunit b 1 (159 aa).

Residues 5 to 25 (FWAFIGLILFLALLFYFKVPA) form a helical membrane-spanning segment.

Belongs to the ATPase B chain family. F-type ATPases have 2 components, F(1) - the catalytic core - and F(0) - the membrane proton channel. F(1) has five subunits: alpha(3), beta(3), gamma(1), delta(1), epsilon(1). F(0) has three main subunits: a(1), b(2) and c(10-14). The alpha and beta chains form an alternating ring which encloses part of the gamma chain. F(1) is attached to F(0) by a central stalk formed by the gamma and epsilon chains, while a peripheral stalk is formed by the delta and b chains.

Its subcellular location is the cell inner membrane. F(1)F(0) ATP synthase produces ATP from ADP in the presence of a proton or sodium gradient. F-type ATPases consist of two structural domains, F(1) containing the extramembraneous catalytic core and F(0) containing the membrane proton channel, linked together by a central stalk and a peripheral stalk. During catalysis, ATP synthesis in the catalytic domain of F(1) is coupled via a rotary mechanism of the central stalk subunits to proton translocation. Its function is as follows. Component of the F(0) channel, it forms part of the peripheral stalk, linking F(1) to F(0). This chain is ATP synthase subunit b 1, found in Bartonella bacilliformis (strain ATCC 35685 / KC583 / Herrer 020/F12,63).